We begin with the raw amino-acid sequence, 93 residues long: Small ribosomal subunit protein uS19 (93 aa).

The protein belongs to the universal ribosomal protein uS19 family.

Functionally, protein S19 forms a complex with S13 that binds strongly to the 16S ribosomal RNA. In Helicobacter pylori (strain G27), this protein is Small ribosomal subunit protein uS19.